The sequence spans 308 residues: Glutaminase 2 (308 aa).

Substrate is bound by residues Ser66, Asn117, Glu161, Asn168, Tyr192, Tyr244, and Val262.

The protein belongs to the glutaminase family. In terms of assembly, homotetramer.

The catalysed reaction is L-glutamine + H2O = L-glutamate + NH4(+). The protein is Glutaminase 2 of Escherichia coli O157:H7.